A 199-amino-acid chain; its full sequence is VAMP-like protein YKT61 (199 aa).

The Longin domain occupies Leu-7–Asp-133. The v-SNARE coiled-coil homology domain occupies Lys-139–Leu-199. Cys-195 is lipidated: S-palmitoyl cysteine. At Cys-196 the chain carries Cysteine methyl ester. Residue Cys-196 is the site of S-geranylgeranyl cysteine attachment. Positions Thr-197–Leu-199 are cleaved as a propeptide — removed in mature form.

This sequence belongs to the synaptobrevin family. In terms of assembly, interacts with SYP41. Core constituent of the SNARE complex required for membrane fusion at the trans-Golgi network. Expressed ubiquitously in roots, stems, flowers and leaves.

The protein resides in the cell membrane. May be involved in the secretory pathway. Essential for membrane fusion mediated by either SYP41 or SYP61; triggers the fusion of phospholipid vesicles containing SYP41 or SYP61 and VTI12. This Arabidopsis thaliana (Mouse-ear cress) protein is VAMP-like protein YKT61.